Consider the following 339-residue polypeptide: tRNA pseudouridine synthase D (339 aa).

D80 acts as the Nucleophile in catalysis. Residues 155–311 form the TRUD domain; it reads GFPNYFTEQR…AKGFSWAFEL (157 aa).

This sequence belongs to the pseudouridine synthase TruD family.

It catalyses the reaction uridine(13) in tRNA = pseudouridine(13) in tRNA. In terms of biological role, responsible for synthesis of pseudouridine from uracil-13 in transfer RNAs. This chain is tRNA pseudouridine synthase D, found in Haemophilus influenzae (strain PittEE).